The primary structure comprises 354 residues: Serine/threonine-protein kinase ppk34 (354 aa).

A Protein kinase domain is found at 40–331 (YRLKNMLGYG…IEELLRDPFL (292 aa)). ATP-binding positions include 46–54 (LGYGACSTV) and K69. D200 (proton acceptor) is an active-site residue.

This sequence belongs to the protein kinase superfamily. Ser/Thr protein kinase family.

The protein resides in the cytoplasm. The protein localises to the nucleus. The enzyme catalyses L-seryl-[protein] + ATP = O-phospho-L-seryl-[protein] + ADP + H(+). The catalysed reaction is L-threonyl-[protein] + ATP = O-phospho-L-threonyl-[protein] + ADP + H(+). In Schizosaccharomyces pombe (strain 972 / ATCC 24843) (Fission yeast), this protein is Serine/threonine-protein kinase ppk34 (ppk34).